A 264-amino-acid chain; its full sequence is S-adenosylmethionine decarboxylase proenzyme (264 aa).

Catalysis depends on serine 113, which acts as the Schiff-base intermediate with substrate; via pyruvic acid. Serine 113 is modified (pyruvic acid (Ser); by autocatalysis). The active-site Proton acceptor; for processing activity is histidine 118. Cysteine 141 (proton donor; for catalytic activity) is an active-site residue.

Belongs to the prokaryotic AdoMetDC family. Type 2 subfamily. Heterooctamer of four alpha and four beta chains arranged as a tetramer of alpha/beta heterodimers. Requires pyruvate as cofactor. In terms of processing, is synthesized initially as an inactive proenzyme. Formation of the active enzyme involves a self-maturation process in which the active site pyruvoyl group is generated from an internal serine residue via an autocatalytic post-translational modification. Two non-identical subunits are generated from the proenzyme in this reaction, and the pyruvate is formed at the N-terminus of the alpha chain, which is derived from the carboxyl end of the proenzyme. The post-translation cleavage follows an unusual pathway, termed non-hydrolytic serinolysis, in which the side chain hydroxyl group of the serine supplies its oxygen atom to form the C-terminus of the beta chain, while the remainder of the serine residue undergoes an oxidative deamination to produce ammonia and the pyruvoyl group blocking the N-terminus of the alpha chain.

The catalysed reaction is S-adenosyl-L-methionine + H(+) = S-adenosyl 3-(methylsulfanyl)propylamine + CO2. It participates in amine and polyamine biosynthesis; S-adenosylmethioninamine biosynthesis; S-adenosylmethioninamine from S-adenosyl-L-methionine: step 1/1. Its function is as follows. Catalyzes the decarboxylation of S-adenosylmethionine to S-adenosylmethioninamine (dcAdoMet), the propylamine donor required for the synthesis of the polyamines spermine and spermidine from the diamine putrescine. This chain is S-adenosylmethionine decarboxylase proenzyme, found in Xylella fastidiosa (strain Temecula1 / ATCC 700964).